We begin with the raw amino-acid sequence, 310 residues long: Pantothenate kinase (310 aa).

Residue 95–102 (GSVAVGKS) participates in ATP binding.

Belongs to the prokaryotic pantothenate kinase family.

The protein resides in the cytoplasm. The enzyme catalyses (R)-pantothenate + ATP = (R)-4'-phosphopantothenate + ADP + H(+). It participates in cofactor biosynthesis; coenzyme A biosynthesis; CoA from (R)-pantothenate: step 1/5. This Rhodococcus jostii (strain RHA1) protein is Pantothenate kinase.